Consider the following 378-residue polypeptide: Protein RecA (378 aa).

65 to 72 (GPESSGKT) is a binding site for ATP. The segment at 325 to 378 (AYGMDQTGEEDDQADDKSKDKATKPSDKSQAQAKPKKPVATETSLDLDDSKTDK) is disordered. The span at 339 to 351 (DDKSKDKATKPSD) shows a compositional bias: basic and acidic residues.

The protein belongs to the RecA family.

Its subcellular location is the cytoplasm. In terms of biological role, can catalyze the hydrolysis of ATP in the presence of single-stranded DNA, the ATP-dependent uptake of single-stranded DNA by duplex DNA, and the ATP-dependent hybridization of homologous single-stranded DNAs. It interacts with LexA causing its activation and leading to its autocatalytic cleavage. The chain is Protein RecA from Lactiplantibacillus pentosus (Lactobacillus pentosus).